A 147-amino-acid polypeptide reads, in one-letter code: Hemoglobin subunit gamma (147 aa).

The Globin domain maps to N3–H147. The heme b site is built by H64 and H93.

It belongs to the globin family. In terms of assembly, heterotetramer of two alpha chains and two gamma chains in fetal hemoglobin (Hb F). As to expression, red blood cells.

Gamma chains make up the fetal hemoglobin F, in combination with alpha chains. The polypeptide is Hemoglobin subunit gamma (HBG) (Aotus azarae (Azara's night monkey)).